The primary structure comprises 125 residues: Alpha-endosulfine (125 aa).

The span at 1-37 shows a compositional bias: basic and acidic residues; the sequence is MSDKYIGDSHLEETGEEKQDSQEKEAVTPEKAEEQKL. Residues 1–52 are disordered; it reads MSDKYIGDSHLEETGEEKQDSQEKEAVTPEKAEEQKLKAKYPNLGQKPGGSD. The residue at position 28 (Thr28) is a Phosphothreonine; by CDK2. Ser67 is subject to Phosphoserine; by GWL. A disordered region spans residues 86 to 107; that stretch reads GPDKNLVTGDHIPTPQDLPQRK. Thr99 carries the phosphothreonine; by CDK2 modification. Ser109 carries the post-translational modification Phosphoserine; by PKA.

It belongs to the endosulfine family. Interacts (when phosphorylated at Ser-67) with ppp2r2d. Post-translationally, phosphorylation at Ser-67 by gwl during mitosis is essential for interaction with PPP2R2D (PR55-delta) and subsequent inactivation of PP2A. Phosphorylated by PKA.

Its subcellular location is the cytoplasm. Functionally, protein phosphatase inhibitor that specifically inhibits protein phosphatase 2A (PP2A) during mitosis. When phosphorylated at Ser-67 during mitosis, specifically interacts with ppp2r2d (PR55-delta) and inhibits its activity, leading to inactivation of PP2A, an essential condition to keep cyclin-B1-CDK1 activity high during M phase. This chain is Alpha-endosulfine (ensa), found in Xenopus laevis (African clawed frog).